We begin with the raw amino-acid sequence, 337 residues long: S-adenosylmethionine:tRNA ribosyltransferase-isomerase (337 aa).

This sequence belongs to the QueA family. Monomer.

The protein resides in the cytoplasm. The enzyme catalyses 7-aminomethyl-7-carbaguanosine(34) in tRNA + S-adenosyl-L-methionine = epoxyqueuosine(34) in tRNA + adenine + L-methionine + 2 H(+). Its pathway is tRNA modification; tRNA-queuosine biosynthesis. Its function is as follows. Transfers and isomerizes the ribose moiety from AdoMet to the 7-aminomethyl group of 7-deazaguanine (preQ1-tRNA) to give epoxyqueuosine (oQ-tRNA). The polypeptide is S-adenosylmethionine:tRNA ribosyltransferase-isomerase (Legionella pneumophila subsp. pneumophila (strain Philadelphia 1 / ATCC 33152 / DSM 7513)).